Consider the following 41-residue polypeptide: Photosystem I reaction center subunit IX (41 aa).

A helical transmembrane segment spans residues 7–27; it reads YLSTAPVLATVWMIITAGILI.

This sequence belongs to the PsaJ family.

It localises to the cellular thylakoid membrane. Its function is as follows. May help in the organization of the PsaE and PsaF subunits. This is Photosystem I reaction center subunit IX from Trichodesmium erythraeum (strain IMS101).